The primary structure comprises 1015 residues: MKNNLRYGIRKHKLGAASVFLGTMIVVGMGQDKEAAASEQKTTTVEENGNSATENKVNETQTTTTNVNTIDETQSYSATATEQPSNATQVTTEEAPKAVQAPQTAQPANLETVKEEVVKEEAKPQVKETTQSQDNSGDQRQVDLTPKKATQNQVAETQVEVAQPRTASESKPRVTRSADVVEAKEASDEKVETGTDVTSKVTVESGSIEAPQGNKVEPHAGQRVVLKYKLKFADGLKRGDYFDFTLSNNVNTYGVSTARKVPEIKNGSVVMATGEILGNGNIRYTFTNEIEHKVEVTANLEINLFIDPKTVQSNGEQKITSKLNGEETEKTIPVVYNPGVSNSYTNVNGSIETFNKESNKFTHIAYIKPMNGNQSNTVSVTGTLTEGSNLAGGQPTVKVYEYLGKKDELPQSVYANTSDTNKFKDVTKEMNGKLSVQDNGSYSLNLDKLDKTYVIHYTGEYLQGSDQVNFRTELYGYPERAYKSYYVYGGYRLTWDNGLVLYSNKADGNGKNGQIIQNNDFEYKEDTAKGTMSGQYDAKQIIETEENQDNTPLDIDYHTAIDGEGGYVDGYIETIEETDSSAIDIDYHTAVDSEAGHVGGYTESSEESNPIDFEESTHENSKHHADVVEYEEDTNPGGGQVTTESNLVEFDEESTKGIVTGAVSDHTTIEDTKEYTTESNLIELVDELPEEHGQAQGPIEEITENNHHISHSGLGTENGHGNYGVIEEIEENSHVDIKSELGYEGGQNSGNQSFEEDTEEDKPKYEQGGNIVDIDFDSVPQIQGQNNGNQSFEEDTEKDKPKYEQGGNIIDIDFDSVPQIHGFNKHTEIIEEDTNKDKPNYQFGGHNSVDFEEDTLPKVSGQNEGQQTIEEDTTPPTPPTPEVPSEPETPTPPTPEVPSEPETPTPPTPEVPSEPETPTPPTPEVPAEPGKPVPPAKEEPKKPSKPVEQGKVVTPVIEINEKVKAVAPTKKAQSKKSELPETGGEESTNKGMLFGGLFSILGLALLRRNKKNNKA.

An N-terminal signal peptide occupies residues 1–36; that stretch reads MKNNLRYGIRKHKLGAASVFLGTMIVVGMGQDKEAA. The YSIRK-G/S signaling motif signature appears at 7-18; the sequence is YGIRKHKLGAAS. The segment at 37-512 is ligand-binding A region; sequence ASEQKTTTVE…SNKADGNGKN (476 aa). Over residues 75 to 92 the composition is skewed to polar residues; that stretch reads SYSATATEQPSNATQVTT. A disordered region spans residues 75–199; sequence SYSATATEQP…KVETGTDVTS (125 aa). Residues 112 to 126 show a composition bias toward basic and acidic residues; the sequence is TVKEEVVKEEAKPQV. The span at 129–139 shows a compositional bias: polar residues; sequence TTQSQDNSGDQ. Residues 179 to 193 show a composition bias toward basic and acidic residues; it reads DVVEAKEASDEKVET. The segment at 194–512 is fibrinogen/elastin/tropoelastin-binding; that stretch reads GTDVTSKVTV…SNKADGNGKN (319 aa). The segment at 513–873 is fibronectin-binding; the sequence is GQIIQNNDFE…EGQQTIEEDT (361 aa). One copy of the B-1 repeat lies at 546 to 575; sequence ENQDNTPLDIDYHTAIDGEGGYVDGYIETI. The tract at residues 546-605 is 2 X approximate tandem repeats; that stretch reads ENQDNTPLDIDYHTAIDGEGGYVDGYIETIEETDSSAIDIDYHTAVDSEAGHVGGYTESS. One copy of the B-2 repeat lies at 576–605; the sequence is EETDSSAIDIDYHTAVDSEAGHVGGYTESS. Disordered regions lie at residues 596-623, 741-815, 828-953, and 966-992; these read GHVG…NSKH, LGYE…IDFD, EIIE…GKVV, and VAPT…NKGM. The stretch at 746–783 is one D-1 repeat; sequence GQNSGNQSFEEDTEEDKPKYEQGGNIVDIDFDSVPQIQ. Residues 746-875 form a 4 X approximate tandem repeats region; that stretch reads GQNSGNQSFE…QQTIEEDTTP (130 aa). The span at 780 to 791 shows a compositional bias: polar residues; that stretch reads PQIQGQNNGNQS. The stretch at 784–821 is one D-2 repeat; that stretch reads GQNNGNQSFEEDTEKDKPKYEQGGNIIDIDFDSVPQIH. One copy of the D-3 repeat lies at 822 to 860; that stretch reads GFNKHTEIIEEDTNKDKPNYQFGGHNSVDFEEDTLPKVS. Residues 828–839 show a composition bias toward basic and acidic residues; the sequence is EIIEEDTNKDKP. Residues 861-875 form a D-4; truncated repeat; it reads GQNEGQQTIEEDTTP. Residues 875–935 are compositionally biased toward pro residues; the sequence is PPTPPTPEVP…PAEPGKPVPP (61 aa). 5 WR repeats span residues 876–889, 890–903, 904–917, 918–931, and 932–945; these read PTPP…EPET, PTPP…EPGK, and PVPP…KPSK. The segment at 876–945 is 5 X tandem repeats, Pro-rich (WR); it reads PTPPTPEVPS…AKEEPKKPSK (70 aa). An LPXTG sorting signal motif is present at residues 979 to 983; it reads LPETG. Thr982 is subject to Pentaglycyl murein peptidoglycan amidated threonine. A propeptide spans 983-1015 (removed by sortase); that stretch reads GGEESTNKGMLFGGLFSILGLALLRRNKKNNKA.

The protein localises to the secreted. It localises to the cell wall. Its function is as follows. Promotes bacterial attachment to multiple substrates, such as fibronectin (Fn), fibrinogen (Fg), elastin peptides and tropoelastin. This confers to S.aureus the ability to invade endothelial cells. Promotes adherence to and aggregation of activated platelets. This chain is Fibronectin-binding protein A (fnbA), found in Staphylococcus aureus (strain MSSA476).